A 299-amino-acid chain; its full sequence is N-acetylaspartate synthetase (299 aa).

Over residues 44-57 (AAPGPAAAPPPAAG) the composition is skewed to pro residues. Residues 44–70 (AAPGPAAAPPPAAGPQPHGGTGGAGPP) are disordered. A compositionally biased stretch (gly residues) spans 60-70 (PHGGTGGAGPP). A helical membrane pass occupies residues 118 to 138 (YALLAALCFAVTRSLLLTCLV). Residues 143 to 280 (LALRYYYSRK…VLPGMTLSLA (138 aa)) form the N-acetyltransferase domain.

Belongs to the NAT8 family. Expressed in brain, kidney, liver and spleen. In brain, present in neurons but not in astrocytes (at protein level). Expressed in brain, thymus and spleen.

It is found in the cytoplasm. Its subcellular location is the microsome membrane. The protein localises to the mitochondrion membrane. It localises to the endoplasmic reticulum membrane. The enzyme catalyses L-aspartate + acetyl-CoA = N-acetyl-L-aspartate + CoA + H(+). Its activity is regulated as follows. Aminooxyacetic acid (AOAA) blocks its activity in both cytoplasm and mitochondria. Functionally, catalyzes the synthesis of N-acetylaspartate acid (NAA) from L-aspartate and acetyl-CoA. Promotes dopamine uptake by regulating TNF-alpha expression. Attenuates methamphetamine-induced inhibition of dopamine uptake. This Mus musculus (Mouse) protein is N-acetylaspartate synthetase (Nat8l).